The chain runs to 103 residues: UPF0473 protein LVIS_1220 (103 aa).

It belongs to the UPF0473 family.

The protein is UPF0473 protein LVIS_1220 of Levilactobacillus brevis (strain ATCC 367 / BCRC 12310 / CIP 105137 / JCM 1170 / LMG 11437 / NCIMB 947 / NCTC 947) (Lactobacillus brevis).